The following is a 73-amino-acid chain: MAPVDVESQVELDLKIEDFDYKNVALIKRFMTPVGRVLSRRATGLSAKKQRKMAKEVRKMKFLALVPYCDRHK.

It belongs to the bacterial ribosomal protein bS18 family. As to quaternary structure, part of the 30S ribosomal subunit. Forms a tight heterodimer with protein bS6.

Functionally, binds as a heterodimer with protein bS6 to the central domain of the 16S rRNA, where it helps stabilize the platform of the 30S subunit. The chain is Small ribosomal subunit protein bS18 from Neorickettsia sennetsu (strain ATCC VR-367 / Miyayama) (Ehrlichia sennetsu).